The following is a 1117-amino-acid chain: PR domain zinc finger protein 10 (1117 aa).

The interval 97-142 is disordered; that stretch reads QQTPLGGLEAKEEEDEDEDEDTEEDEEEDGEDADLDDWEPDPPRPF. Residues 107-136 are compositionally biased toward acidic residues; the sequence is KEEEDEDEDEDTEEDEEEDGEDADLDDWEP. One can recognise an SET domain in the interval 182-300; that stretch reads LPLVLYIDRF…PKQELKVWYA (119 aa). An N-terminal PR domain; essential for transcriptional activator activity region spans residues 201 to 305; that stretch reads IPKRTQLGPV…KVWYAASYAE (105 aa). The segment at 329–351 adopts a C2H2-type 1 zinc-finger fold; that stretch reads WPCYECNRRFISSEQLQQHLNSH. A Glycyl lysine isopeptide (Lys-Gly) (interchain with G-Cter in SUMO2) cross-link involves residue Lys354. Residues 361–381 are compositionally biased toward basic residues; the sequence is TRGRGRGRGKRRFGPGRRPGR. Residues 361-386 are disordered; the sequence is TRGRGRGRGKRRFGPGRRPGRPPKFI. Ser398 carries the phosphoserine modification. Thr402 is modified (phosphothreonine). The disordered stretch occupies residues 440 to 474; sequence QETQSSLEHEPETHTLHLQPQHEESVVPTQSTLTA. The span at 446 to 464 shows a compositional bias: basic and acidic residues; that stretch reads LEHEPETHTLHLQPQHEES. 9 C2H2-type zinc fingers span residues 500–522, 530–552, 558–580, 586–609, 614–636, 642–665, 697–720, 742–765, and 804–827; these read FKCL…LRFH, LTCD…MKLH, YSCI…VAIH, FTCP…RSFH, YQCT…MLRH, FLCS…QRMH, FKCR…SKRH, YFCQ…LKNH, and VCCP…RKKH. The tract at residues 871–1097 is C-terminal glutamine-rich region; essential for transcriptional activator activity; that stretch reads QAMTELSQTL…QTTSQQQTTQ (227 aa). Disordered regions lie at residues 919–943, 958–1001, and 1066–1094; these read VAPA…DPQP, GQPL…SSVQ, and QTSA…SQQQ. Residues 924–934 are compositionally biased toward polar residues; the sequence is SPHQSQQSTVD.

It belongs to the class V-like SAM-binding methyltransferase superfamily.

The protein localises to the nucleus. In terms of biological role, transcriptional activator, essential for early embryonic development and survival of embryonic stem cells (ESCs). Supports cell growth and survival during early development by transcriptionally activating the expression of the translation initiation factor EIF3B, to sustain global translation. Activates the transcription of FLNC. The protein is PR domain zinc finger protein 10 (PRDM10) of Pongo abelii (Sumatran orangutan).